The sequence spans 301 residues: Cuticle collagen 2 (301 aa).

Residues 1–37 form the signal peptide; that stretch reads MDIDARIKAYKFVAYSAVTFSVVAVVSVFITLPMVYN. Triple-helical region stretches follow at residues 105 to 134, 153 to 176, 183 to 212, and 215 to 282; these read GPPG…PGKG, GPPG…PGSP, GPAG…PGAS, and GGPG…KGIC. The tract at residues 109 to 284 is disordered; it reads PGGSPGKPGK…GEGEKGICPK (176 aa). Composition is skewed to pro residues over residues 143–170 and 179–191; these read TQPP…PGPD and PSGP…PGPA. Over residues 201–218 the composition is skewed to gly residues; sequence GAPGGPGEPGASEQGGPG. A compositionally biased stretch (pro residues) spans 219–229; the sequence is EPGPAGPPGPA. A compositionally biased stretch (low complexity) spans 252-261; it reads PGAAGAPGAD. Gly residues predominate over residues 262–274; it reads GNPGGPGTAGKPG.

Belongs to the cuticular collagen family. As to quaternary structure, collagen polypeptide chains are complexed within the cuticle by disulfide bonds and other types of covalent cross-links. In terms of tissue distribution, syncytial dorsal and ventral epidermis.

Nematode cuticles are composed largely of collagen-like proteins. The cuticle functions both as an exoskeleton and as a barrier to protect the worm from its environment. In Caenorhabditis elegans, this protein is Cuticle collagen 2 (col-2).